The following is a 336-amino-acid chain: NADH-quinone oxidoreductase subunit H (336 aa).

The next 8 membrane-spanning stretches (helical) occupy residues 4–24 (YILW…LVVA), 75–95 (YLFF…WAVI), 108–128 (LGLL…VIAG), 154–174 (MGFA…TGII), 181–201 (LWHW…IAGI), 233–253 (LFFL…SIMF), 272–292 (FVPG…MFLW), and 308–328 (LGWK…ACMV).

This sequence belongs to the complex I subunit 1 family. NDH-1 is composed of 14 different subunits. Subunits NuoA, H, J, K, L, M, N constitute the membrane sector of the complex.

The protein localises to the cell inner membrane. It catalyses the reaction a quinone + NADH + 5 H(+)(in) = a quinol + NAD(+) + 4 H(+)(out). Functionally, NDH-1 shuttles electrons from NADH, via FMN and iron-sulfur (Fe-S) centers, to quinones in the respiratory chain. The immediate electron acceptor for the enzyme in this species is believed to be ubiquinone. Couples the redox reaction to proton translocation (for every two electrons transferred, four hydrogen ions are translocated across the cytoplasmic membrane), and thus conserves the redox energy in a proton gradient. This subunit may bind ubiquinone. The protein is NADH-quinone oxidoreductase subunit H of Francisella philomiragia subsp. philomiragia (strain ATCC 25017 / CCUG 19701 / FSC 153 / O#319-036).